The primary structure comprises 101 residues: Small ribosomal subunit protein uS14 (101 aa).

This sequence belongs to the universal ribosomal protein uS14 family. In terms of assembly, part of the 30S ribosomal subunit. Contacts proteins S3 and S10.

Functionally, binds 16S rRNA, required for the assembly of 30S particles and may also be responsible for determining the conformation of the 16S rRNA at the A site. The protein is Small ribosomal subunit protein uS14 of Bartonella henselae (strain ATCC 49882 / DSM 28221 / CCUG 30454 / Houston 1) (Rochalimaea henselae).